A 302-amino-acid polypeptide reads, in one-letter code: Sulfate adenylyltransferase subunit 2 (302 aa).

The protein belongs to the PAPS reductase family. CysD subfamily. In terms of assembly, heterodimer composed of CysD, the smaller subunit, and CysN.

The enzyme catalyses sulfate + ATP + H(+) = adenosine 5'-phosphosulfate + diphosphate. It functions in the pathway sulfur metabolism; hydrogen sulfide biosynthesis; sulfite from sulfate: step 1/3. Its function is as follows. With CysN forms the ATP sulfurylase (ATPS) that catalyzes the adenylation of sulfate producing adenosine 5'-phosphosulfate (APS) and diphosphate, the first enzymatic step in sulfur assimilation pathway. APS synthesis involves the formation of a high-energy phosphoric-sulfuric acid anhydride bond driven by GTP hydrolysis by CysN coupled to ATP hydrolysis by CysD. The sequence is that of Sulfate adenylyltransferase subunit 2 from Serratia proteamaculans (strain 568).